The primary structure comprises 334 residues: Chitinase 9 (334 aa).

The first 23 residues, Met1 to Ala23, serve as a signal peptide directing secretion. Residues Glu24–Gly64 enclose the Chitin-binding type-1 domain. 8 cysteine pairs are disulfide-bonded: Cys26-Cys41, Cys35-Cys47, Cys38-Cys65, Cys40-Cys54, Cys58-Cys62, Cys107-Cys169, Cys181-Cys189, and Cys288-Cys320. The active-site Proton donor is the Glu151.

It belongs to the glycosyl hydrolase 19 family. Chitinase class I subfamily. In terms of tissue distribution, expressed at high levels in roots, sheaths and meristems.

It catalyses the reaction Random endo-hydrolysis of N-acetyl-beta-D-glucosaminide (1-&gt;4)-beta-linkages in chitin and chitodextrins.. In terms of biological role, may play a role in defense against fungal pathogens containing chitin. This Oryza sativa subsp. japonica (Rice) protein is Chitinase 9 (Cht9).